The sequence spans 152 residues: Transcriptional repressor NrdR (152 aa).

The segment at 3–34 is a zinc-finger region; it reads CPFCNHGELKVIDSRNAPEANAIKRRRECLKC. Residues 48–138 enclose the ATP-cone domain; the sequence is LQVLKRDGRY…VYRRFKDVGE (91 aa).

It belongs to the NrdR family. Zn(2+) serves as cofactor.

Its function is as follows. Negatively regulates transcription of bacterial ribonucleotide reductase nrd genes and operons by binding to NrdR-boxes. This chain is Transcriptional repressor NrdR, found in Chlamydia pneumoniae (Chlamydophila pneumoniae).